A 316-amino-acid chain; its full sequence is Phosphoribosylaminoimidazole-succinocarboxamide synthase (316 aa).

It belongs to the SAICAR synthetase family.

The catalysed reaction is 5-amino-1-(5-phospho-D-ribosyl)imidazole-4-carboxylate + L-aspartate + ATP = (2S)-2-[5-amino-1-(5-phospho-beta-D-ribosyl)imidazole-4-carboxamido]succinate + ADP + phosphate + 2 H(+). Its pathway is purine metabolism; IMP biosynthesis via de novo pathway; 5-amino-1-(5-phospho-D-ribosyl)imidazole-4-carboxamide from 5-amino-1-(5-phospho-D-ribosyl)imidazole-4-carboxylate: step 1/2. This is Phosphoribosylaminoimidazole-succinocarboxamide synthase from Flavobacterium psychrophilum (strain ATCC 49511 / DSM 21280 / CIP 103535 / JIP02/86).